Here is a 337-residue protein sequence, read N- to C-terminus: Cathepsin L-like (337 aa).

A signal peptide spans Met-1–Ser-18. Positions Ala-19–Gln-119 are cleaved as a propeptide — activation peptide. Asn-108 is a glycosylation site (N-linked (GlcNAc...) asparagine). Intrachain disulfides connect Cys-141–Cys-184, Cys-175–Cys-217, and Cys-276–Cys-326. Cys-144 is a catalytic residue. Residues His-283 and Asn-304 contribute to the active site.

The protein belongs to the peptidase C1 family. As to expression, expressed in intestine, pharynx posterior bulb, hypodermis and cuticle (at protein level). Expressed in germ cells, developing oocytes, sheath cells surrounding germ cells and oocytes, and in the eggshell (at protein level).

The protein localises to the secreted. Its subcellular location is the cytoplasmic granule. It is found in the lysosome. The protein resides in the endosome. It localises to the cytoplasmic vesicle. The protein localises to the phagosome. The enzyme catalyses Specificity close to that of papain. As compared to cathepsin B, cathepsin L exhibits higher activity toward protein substrates, but has little activity on Z-Arg-Arg-NHMec, and no peptidyl-dipeptidase activity.. Its function is as follows. Cysteine protease which plays an essential role in the degradation of proteins in lysosomes. During early embryogenesis, maternally required for the proteolytic processing of yolk proteins in platelets, a lysosome-like structure where a slow and controlled degradation of yolk proteins occurs. In the gonad, required for the clearance of apoptotic germ cells in the engulfing cell phagolysosomes. In embryos, required for the degradation of endocytic and autophagic cargos. In embryos, may play a role in the degradation of lipid-containing droplets. Required for larval development. This is Cathepsin L-like from Caenorhabditis elegans.